A 1320-amino-acid chain; its full sequence is Bifunctional protein PutA (1320 aa).

The interval leucine 228–serine 574 is proline dehydrogenase. Residues glutamine 653–alanine 1119 form an aldehyde dehydrogenase region. Catalysis depends on residues glutamate 883 and cysteine 917.

In the N-terminal section; belongs to the proline dehydrogenase family. The protein in the C-terminal section; belongs to the aldehyde dehydrogenase family. Homodimer. FAD serves as cofactor.

It catalyses the reaction L-proline + a quinone = (S)-1-pyrroline-5-carboxylate + a quinol + H(+). The catalysed reaction is L-glutamate 5-semialdehyde + NAD(+) + H2O = L-glutamate + NADH + 2 H(+). Its pathway is amino-acid degradation; L-proline degradation into L-glutamate; L-glutamate from L-proline: step 1/2. It participates in amino-acid degradation; L-proline degradation into L-glutamate; L-glutamate from L-proline: step 2/2. Functionally, oxidizes proline to glutamate for use as a carbon and nitrogen source and also function as a transcriptional repressor of the put operon. The chain is Bifunctional protein PutA (putA) from Escherichia coli (strain K12).